A 249-amino-acid chain; its full sequence is Adapter protein MecA (249 aa).

The protein belongs to the MecA family. In terms of assembly, homodimer.

Functionally, enables the recognition and targeting of unfolded and aggregated proteins to the ClpC protease or to other proteins involved in proteolysis. The protein is Adapter protein MecA of Streptococcus thermophilus (strain CNRZ 1066).